The chain runs to 220 residues: 7-cyano-7-deazaguanine synthase (220 aa).

Residue 11-21 (VSGGMDSVTLM) coordinates ATP. C186, C194, C197, and C200 together coordinate Zn(2+).

Belongs to the QueC family. Requires Zn(2+) as cofactor.

The catalysed reaction is 7-carboxy-7-deazaguanine + NH4(+) + ATP = 7-cyano-7-deazaguanine + ADP + phosphate + H2O + H(+). Its pathway is purine metabolism; 7-cyano-7-deazaguanine biosynthesis. Catalyzes the ATP-dependent conversion of 7-carboxy-7-deazaguanine (CDG) to 7-cyano-7-deazaguanine (preQ(0)). The sequence is that of 7-cyano-7-deazaguanine synthase from Porphyromonas gingivalis (strain ATCC BAA-308 / W83).